Here is a 159-residue protein sequence, read N- to C-terminus: Phosphopantetheine adenylyltransferase (159 aa).

Thr-9 lines the substrate pocket. ATP-binding positions include 9–10 (TF) and His-17. Substrate is bound by residues Lys-41, Leu-73, and Arg-87. ATP contacts are provided by residues 88–90 (GLR), Glu-98, and 123–129 (YSYISST).

This sequence belongs to the bacterial CoaD family. In terms of assembly, homohexamer. The cofactor is Mg(2+).

Its subcellular location is the cytoplasm. The catalysed reaction is (R)-4'-phosphopantetheine + ATP + H(+) = 3'-dephospho-CoA + diphosphate. It participates in cofactor biosynthesis; coenzyme A biosynthesis; CoA from (R)-pantothenate: step 4/5. Its function is as follows. Reversibly transfers an adenylyl group from ATP to 4'-phosphopantetheine, yielding dephospho-CoA (dPCoA) and pyrophosphate. This is Phosphopantetheine adenylyltransferase from Azotobacter vinelandii (strain DJ / ATCC BAA-1303).